The sequence spans 140 residues: Putative nickel-responsive regulator (140 aa).

Residues His81, His92, His94, and Cys100 each coordinate Ni(2+).

This sequence belongs to the transcriptional regulatory CopG/NikR family. Requires Ni(2+) as cofactor.

Transcriptional regulator. The chain is Putative nickel-responsive regulator from Methanocella arvoryzae (strain DSM 22066 / NBRC 105507 / MRE50).